Consider the following 98-residue polypeptide: Cystatin-B (98 aa).

Residue Met1 is modified to N-acetylmethionine. A Secondary area of contact motif is present at residues 46–50; the sequence is QVVAG.

Belongs to the cystatin family.

The protein localises to the cytoplasm. This is an intracellular thiol proteinase inhibitor. This is Cystatin-B (CSTB) from Sus scrofa (Pig).